The following is a 358-amino-acid chain: Presenilin hop-1 (358 aa).

At 1-12 (MPRTKRVYSGKT) the chain is on the cytoplasmic side. Residues 13-33 (ITGVLYPVAICMLFVAINVKL) form a helical membrane-spanning segment. Topologically, residues 34–57 (SQPEQQEQSKVVYGLFHSYDTADS) are lumenal. A helical transmembrane segment spans residues 58–78 (GTITLYLIGFLILTTSLGVFC). Residues 79-86 (YQMKFYKA) lie on the Cytoplasmic side of the membrane. A helical transmembrane segment spans residues 87-107 (IKVYVLANSIGILLVYSVFHF). The Lumenal segment spans residues 108 to 115 (QRIAEAQS). A helical membrane pass occupies residues 116-136 (IPVSVPTFFFLILQFGGLGIT). The Cytoplasmic portion of the chain corresponds to 137-148 (CLHWKSHRRLHQ). Residues 149-169 (FYLIMLAGLTAIFILNILPDW) traverse the membrane as a helical segment. T170 is a topological domain (lumenal). The helical transmembrane segment at 171–191 (VWMALTAISFWDIVAVLTPCG) threads the bilayer. Residue D182 is part of the active site. Topologically, residues 192–273 (PLKMLVETAN…EVREVEGTIR (82 aa)) are cytoplasmic. Residues 221 to 240 (EVDSPDTTRSNSTPLTEFNN) show a composition bias toward polar residues. Residues 221-242 (EVDSPDTTRSNSTPLTEFNNSS) form a disordered region. The chain crosses the membrane as a helical span at residues 274 to 294 (LGMGDFVFYSLMLGNTVQTCP). Residue D278 is part of the active site. Residues 295–297 (LPT) lie on the Lumenal side of the membrane. A helical transmembrane segment spans residues 298-318 (VVACFVSNLVGLTITLPIVTL). Topologically, residues 319–321 (SQT) are cytoplasmic. An intramembrane region (helical) is located at residues 322-342 (ALPALPFPLAIAAIFYFSSHI). The PAL motif lies at 324–326 (PAL). Over 343–358 (ALTPFTDLCTSQLILI) the chain is Cytoplasmic.

It belongs to the peptidase A22A family. In terms of assembly, homodimer. Component of the gamma-secretase complex, a complex probably composed of the presenilin homodimer (sel-12, hop-1 or spe-4), nicastrin (aph-2), aph-1 and pen-2. Weakly expressed.

The protein resides in the endoplasmic reticulum membrane. Its subcellular location is the golgi apparatus membrane. Its function is as follows. Probable catalytic subunit of the gamma-secretase complex, an endoprotease complex that catalyzes the intramembrane cleavage of integral membrane proteins such as Notch receptors (lin-12 or glp-1). Probably works redundantly of lin-12, which provides more presenilin function. The protein is Presenilin hop-1 (hop-1) of Caenorhabditis elegans.